The sequence spans 508 residues: Amphoterin-induced protein 3 (508 aa).

The signal sequence occupies residues 1 to 19 (MAWLVLSGILLCMLGAGLG). At 20-383 (TSDLEDVLPP…ARPEPETFNT (364 aa)) the chain is on the extracellular side. The LRRNT domain occupies 25-61 (DVLPPAPHNCPDICICAADVLSCAGRGLQDLPVALPT). 2 disulfide bridges follow: C34–C40 and C38–C47. LRR repeat units lie at residues 62–83 (TAAELDLSHNALKRLHPGWLAP), 86–107 (RLRALHLGYNKLEVLGHGAFTN), 110–133 (GLRTLDLSSNMLRMLHTHDLDGLE), 134–155 (ELEKLLLFNNSLMHLDLDAFQG), 158–178 (MLSHLYLSCNELSSFSFNHLH), and 184–207 (RLRTLDLSSNWLKHISIPELAALP). A glycan (N-linked (GlcNAc...) asparagine) is linked at N107. The N-linked (GlcNAc...) asparagine glycan is linked to N142. One can recognise an LRRCT domain in the interval 219–275 (NPLPCDCSLYHLLRRWHQRGLSALHDFEREYTCLVFKVSESRVRFFEHSRVFKNCSV). Cystine bridges form between C223-C251, C225-C273, and C300-C352. N-linked (GlcNAc...) asparagine glycosylation is found at N272, N301, N362, and N368. The region spanning 279 to 370 (PGLELPEEQL…HNQTLEYNVS (92 aa)) is the Ig-like C2-type domain. A helical transmembrane segment spans residues 384 to 404 (GFTTLLGCIVGLVLVLLYLFA). The Cytoplasmic portion of the chain corresponds to 405-508 (PPCRGCCHCC…STGSEGLVMS (104 aa)).

The protein belongs to the immunoglobulin superfamily. AMIGO family. As to quaternary structure, binds AMIGO1 or AMIGO2. As to expression, ubiquitous.

It is found in the membrane. May mediate heterophilic cell-cell interaction. May contribute to signal transduction through its intracellular domain. The chain is Amphoterin-induced protein 3 from Mus musculus (Mouse).